A 236-amino-acid chain; its full sequence is Methylosome subunit pICln (236 aa).

N-acetylserine is present on S2. The disordered stretch occupies residues 88–109; it reads EESKEPPSDEDEEDNDDIEPIS. Residues S95, S143, S192, S194, S197, and S209 each carry the phosphoserine modification. A compositionally biased stretch (acidic residues) spans 95 to 107; sequence SDEDEEDNDDIEP. T222 is modified (phosphothreonine).

It belongs to the pICln (TC 1.A.47) family. As to quaternary structure, component of the methylosome, a 20S complex containing at least PRMT5/SKB1, WDR77/MEP50 and CLNS1A/pICln. May mediate SNRPD1 and SNRPD3 methylation. Forms a 6S pICln-Sm complex composed of CLNS1A/pICln, SNRPD1, SNRPD2, SNRPE, SNRPF and SNRPG; ring-like structure where CLNS1A/pICln mimics additional Sm proteins and which is unable to assemble into the core snRNP. Interacts with LSM10 and LSM11.

It localises to the cytoplasm. Its subcellular location is the cytosol. The protein localises to the nucleus. The protein resides in the cytoskeleton. Functionally, involved in both the assembly of spliceosomal snRNPs and the methylation of Sm proteins. Chaperone that regulates the assembly of spliceosomal U1, U2, U4 and U5 small nuclear ribonucleoproteins (snRNPs), the building blocks of the spliceosome, and thereby plays an important role in the splicing of cellular pre-mRNAs. Most spliceosomal snRNPs contain a common set of Sm proteins SNRPB, SNRPD1, SNRPD2, SNRPD3, SNRPE, SNRPF and SNRPG that assemble in a heptameric protein ring on the Sm site of the small nuclear RNA to form the core snRNP (Sm core). In the cytosol, the Sm proteins SNRPD1, SNRPD2, SNRPE, SNRPF and SNRPG are trapped in an inactive 6S pICln-Sm complex by the chaperone CLNS1A that controls the assembly of the core snRNP. Dissociation by the SMN complex of CLNS1A from the trapped Sm proteins and their transfer to an SMN-Sm complex triggers the assembly of core snRNPs and their transport to the nucleus. This is Methylosome subunit pICln (Clns1a) from Mus musculus (Mouse).